A 518-amino-acid polypeptide reads, in one-letter code: Serine/threonine-protein kinase UL13 (518 aa).

Residues 1–119 (MDESRRQRPA…QAALTAPPSS (119 aa)) form a disordered region. Positions 151–518 (PGARSFGGSG…TNPCARHALS (368 aa)) constitute a Protein kinase domain. Residues 157–165 (GGSGGYGDV) and lysine 176 each bind ATP. Aspartate 277 (proton acceptor) is an active-site residue.

It belongs to the protein kinase superfamily. Ser/Thr protein kinase family. In terms of processing, autophosphorylated.

It is found in the virion tegument. The protein localises to the host nucleus. It catalyses the reaction L-seryl-[protein] + ATP = O-phospho-L-seryl-[protein] + ADP + H(+). The enzyme catalyses L-threonyl-[protein] + ATP = O-phospho-L-threonyl-[protein] + ADP + H(+). Its function is as follows. Multifunctional serine/threonine kinase that plays a role in several processes including egress of virus particles from the nucleus, modulation of the actin cytoskeleton and regulation of viral and cellular gene expression. Regulates the nuclear localization of viral envelopment factors UL34 and UL31, by phosphorylating the US3 kinase, indicating a role in nuclear egress. Disrupts host nuclear lamins, including LMNA and LMNB1. Phosphorylates the viral Fc receptor composed of glycoproteins E (gE) and I (gI). Phosphorylation of glycoprotein E (gE) by UL13 alters its subcellular localization, from the host early endosome to the plasma membrane. Participates in the transcriptional regulation of cellular and viral mRNAs mainly by phosphorylating the viral transcriptional regulator ICP22. Additional substrates have been identified, including UL41, UL49 or host EF1D. The protein is Serine/threonine-protein kinase UL13 of Homo sapiens (Human).